We begin with the raw amino-acid sequence, 148 residues long: Small ribosomal subunit protein bS6 (148 aa).

A disordered region spans residues 97–148 (EEGPSAMLQRRDDRERGDRGDRGPRRDFDDRGPRRPREDDRPRRSREDEGDE).

The protein belongs to the bacterial ribosomal protein bS6 family.

Binds together with bS18 to 16S ribosomal RNA. The sequence is that of Small ribosomal subunit protein bS6 from Chelativorans sp. (strain BNC1).